We begin with the raw amino-acid sequence, 269 residues long: Type III pantothenate kinase (269 aa).

Residue 9–16 coordinates ATP; the sequence is DVGNTSVK. Residues Tyr106 and 113–116 contribute to the substrate site; that span reads GADR. Asp115 functions as the Proton acceptor in the catalytic mechanism. A K(+)-binding site is contributed by Asp137. Thr140 contributes to the ATP binding site. Thr193 lines the substrate pocket.

This sequence belongs to the type III pantothenate kinase family. Homodimer. NH4(+) serves as cofactor. Requires K(+) as cofactor.

It localises to the cytoplasm. It catalyses the reaction (R)-pantothenate + ATP = (R)-4'-phosphopantothenate + ADP + H(+). The protein operates within cofactor biosynthesis; coenzyme A biosynthesis; CoA from (R)-pantothenate: step 1/5. Its function is as follows. Catalyzes the phosphorylation of pantothenate (Pan), the first step in CoA biosynthesis. This Lawsonia intracellularis (strain PHE/MN1-00) protein is Type III pantothenate kinase.